We begin with the raw amino-acid sequence, 180 residues long: Early nodulin-16 (180 aa).

The N-terminal stretch at 1–22 (MASSSPILLMIIFSMWLLISHS) is a signal peptide. Residues 25-129 (TDYLIGDSHN…GLKLAVVVQN (105 aa)) enclose the Phytocyanin domain. An N-linked (GlcNAc...) asparagine glycan is attached at asparagine 67. Cysteine 83 and cysteine 117 form a disulfide bridge. Residue asparagine 152 is glycosylated (N-linked (GlcNAc...) asparagine). Serine 154 carries the GPI-anchor amidated serine lipid modification. Residues 155-180 (GNKGGAAGLGFIMWLGVSLVMMMFLI) constitute a propeptide, removed in mature form.

It belongs to the early nodulin-like (ENODL) family. In terms of tissue distribution, expressed in developing nodules upon symbiosis with Sinorhizobium meliloti.

The protein resides in the symbiosome. It localises to the cell membrane. Functionally, may act as a carbohydrate transporter. This Medicago truncatula (Barrel medic) protein is Early nodulin-16.